Consider the following 50-residue polypeptide: Large ribosomal subunit protein bL33 (50 aa).

This sequence belongs to the bacterial ribosomal protein bL33 family.

The protein is Large ribosomal subunit protein bL33 of Koribacter versatilis (strain Ellin345).